Reading from the N-terminus, the 474-residue chain is Cysteine protease ATG4A (474 aa).

Residues Met1–Gln32 are disordered. Cys161 functions as the Nucleophile in the catalytic mechanism. Residues Asp358 and His360 contribute to the active site. The segment covering Lys439–Gly449 has biased composition (polar residues). A disordered region spans residues Lys439–Leu474.

It belongs to the peptidase C54 family. Interacts with ATG8.

It is found in the cytoplasm. The catalysed reaction is [protein]-C-terminal L-amino acid-glycyl-phosphatidylethanolamide + H2O = [protein]-C-terminal L-amino acid-glycine + a 1,2-diacyl-sn-glycero-3-phosphoethanolamine. Functionally, cysteine protease that plays a key role in autophagy by mediating both proteolytic activation and delipidation of ATG8 family proteins. The protease activity is required for proteolytic activation of ATG8 family proteins: cleaves the C-terminal amino acid of ATG8 proteins to reveal a C-terminal glycine. Exposure of the glycine at the C-terminus is essential for ATG8 proteins conjugation to phosphatidylethanolamine (PE) and insertion to membranes, which is necessary for autophagy. In addition to the protease activity, also mediates delipidation of PE-conjugated ATG8 proteins. The polypeptide is Cysteine protease ATG4A (ATG4A) (Oryza sativa subsp. japonica (Rice)).